The primary structure comprises 50 residues: Peptide encoded by miPEP319a (50 aa).

In terms of biological role, regulatory peptide encoded by the primary transcript (pri-miR319a) of the microRNA miR319a that enhances the accumulation of its corresponding mature miRNA. Acts probably as a transcriptional activator of its corresponding pri-miRNA. The protein is Peptide encoded by miPEP319a of Arabidopsis thaliana (Mouse-ear cress).